We begin with the raw amino-acid sequence, 385 residues long: Cotranscriptional regulator ARB2A homolog (385 aa).

Disordered stretches follow at residues Met-1–Glu-65 and Glu-220–Leu-239. The segment covering Asn-52–Asn-62 has biased composition (low complexity). Basic and acidic residues predominate over residues Glu-220–Lys-238.

Belongs to the ARB2A family.

This Dictyostelium discoideum (Social amoeba) protein is Cotranscriptional regulator ARB2A homolog.